Consider the following 257-residue polypeptide: MLIFLSPAKSLDYKTPPHVATFTQPAYLKQSETLIKQLRKLSPADIANLMHLSDPLALLNFNRYAEWSLPFTPENAKQAVLAFDGDVYDGLAAKNLTADDLDFAQQQVRILSGLYGILKPLDLVQPYRLEMGTRFANKAGKDLYAFWGERLLEAINAELAGMSRPVVLNLASEEYFKAAVGRKINGEVIQPVFEDWKNGKYKIISFYAKRARGLMTRYAVVNRLSEPEGLKAFDYDGYAFVPEVSDDKSWVFRRRES.

This sequence belongs to the UPF0246 family.

The sequence is that of UPF0246 protein Daro_2893 from Dechloromonas aromatica (strain RCB).